A 398-amino-acid chain; its full sequence is Putative transposase y4qJ (398 aa).

This sequence belongs to the transposase 32 family.

The chain is Putative transposase y4qJ from Sinorhizobium fredii (strain NBRC 101917 / NGR234).